The sequence spans 230 residues: TPR repeat-containing protein BB_0298 (230 aa).

2 TPR repeats span residues alanine 69–asparagine 102 and phenylalanine 183–glutamate 216.

In Borreliella burgdorferi (strain ATCC 35210 / DSM 4680 / CIP 102532 / B31) (Borrelia burgdorferi), this protein is TPR repeat-containing protein BB_0298.